Consider the following 285-residue polypeptide: HTH-type transcriptional regulator MurR (285 aa).

The HTH rpiR-type domain maps to 1 to 77 (MLYLTKIRNA…MALIGEYSAS (77 aa)). The segment at residues 37-56 (SRKMAKQLGISQSSIVKFAQ) is a DNA-binding region (H-T-H motif). Residues 128 to 268 (IIEVISKAPF…FVGLVQLNDV (141 aa)) enclose the SIS domain.

Homotetramer.

Its pathway is amino-sugar metabolism; N-acetylmuramate degradation [regulation]. Functionally, represses the expression of the murPQ operon involved in the uptake and degradation of N-acetylmuramic acid (MurNAc). Binds to two adjacent inverted repeats within the operator region. MurNAc 6-phosphate, the substrate of MurQ, is the specific inducer that weakens binding of MurR to the operator. The polypeptide is HTH-type transcriptional regulator MurR (Escherichia coli O9:H4 (strain HS)).